We begin with the raw amino-acid sequence, 142 residues long: Large ribosomal subunit protein uL13 (142 aa).

It belongs to the universal ribosomal protein uL13 family. Part of the 50S ribosomal subunit.

This protein is one of the early assembly proteins of the 50S ribosomal subunit, although it is not seen to bind rRNA by itself. It is important during the early stages of 50S assembly. This Buchnera aphidicola subsp. Cinara cedri (strain Cc) protein is Large ribosomal subunit protein uL13.